Consider the following 917-residue polypeptide: Thiamine biosynthesis bifunctional protein ThiEC (917 aa).

The segment at 1–243 (MSNEYPYASM…EGWKAVRGDK (243 aa)) is thiamine-phosphate synthase. 4-amino-2-methyl-5-(diphosphooxymethyl)pyrimidine-binding positions include 48 to 52 (QLRAK) and D84. D85 and D109 together coordinate Mg(2+). S128 provides a ligand contact to 4-amino-2-methyl-5-(diphosphooxymethyl)pyrimidine. 157 to 159 (STT) provides a ligand contact to 2-[(2R,5Z)-2-carboxy-4-methylthiazol-5(2H)-ylidene]ethyl phosphate. K160 lines the 4-amino-2-methyl-5-(diphosphooxymethyl)pyrimidine pocket. Residues G196 and 216 to 217 (VS) contribute to the 2-[(2R,5Z)-2-carboxy-4-methylthiazol-5(2H)-ylidene]ethyl phosphate site. Positions 256–311 (PATDTQAAQEGAAKPGSEATEKKFTNAKDAKDAQKLAKQQRVDIAARGSKQRDKAH) are disordered. A phosphomethylpyrimidine synthase region spans residues 271–917 (GSEATEKKFT…GGKLYSTAQE (647 aa)). Positions 274–290 (ATEKKFTNAKDAKDAQK) are enriched in basic and acidic residues. Residues N487, M516, Y545, H581, 601-603 (SRG), 642-645 (DGLR), and E681 contribute to the 5-amino-1-(5-phospho-beta-D-ribosyl)imidazole site. H685 contributes to the Zn(2+) binding site. Y708 is a 5-amino-1-(5-phospho-beta-D-ribosyl)imidazole binding site. H749 serves as a coordination point for Zn(2+). Positions 829, 832, and 837 each coordinate [4Fe-4S] cluster.

It in the N-terminal section; belongs to the thiamine-phosphate synthase family. The protein in the C-terminal section; belongs to the ThiC family. The cofactor is [4Fe-4S] cluster.

The catalysed reaction is 2-[(2R,5Z)-2-carboxy-4-methylthiazol-5(2H)-ylidene]ethyl phosphate + 4-amino-2-methyl-5-(diphosphooxymethyl)pyrimidine + 2 H(+) = thiamine phosphate + CO2 + diphosphate. It catalyses the reaction 2-(2-carboxy-4-methylthiazol-5-yl)ethyl phosphate + 4-amino-2-methyl-5-(diphosphooxymethyl)pyrimidine + 2 H(+) = thiamine phosphate + CO2 + diphosphate. It carries out the reaction 4-methyl-5-(2-phosphooxyethyl)-thiazole + 4-amino-2-methyl-5-(diphosphooxymethyl)pyrimidine + H(+) = thiamine phosphate + diphosphate. The enzyme catalyses 5-amino-1-(5-phospho-beta-D-ribosyl)imidazole + S-adenosyl-L-methionine = 4-amino-2-methyl-5-(phosphooxymethyl)pyrimidine + CO + 5'-deoxyadenosine + formate + L-methionine + 3 H(+). Its pathway is cofactor biosynthesis; thiamine diphosphate biosynthesis; thiamine phosphate from 4-amino-2-methyl-5-diphosphomethylpyrimidine and 4-methyl-5-(2-phosphoethyl)-thiazole: step 1/1. In terms of biological role, condenses 4-methyl-5-(beta-hydroxyethyl)thiazole monophosphate (THZ-P) and 2-methyl-4-amino-5-hydroxymethyl pyrimidine pyrophosphate (HMP-PP) to form thiamine monophosphate (TMP). Its function is as follows. Catalyzes the synthesis of the hydroxymethylpyrimidine phosphate (HMP-P) moiety of thiamine from aminoimidazole ribotide (AIR) in a radical S-adenosyl-L-methionine (SAM)-dependent reaction. The sequence is that of Thiamine biosynthesis bifunctional protein ThiEC (thiE/thiC) from Bifidobacterium longum (strain NCC 2705).